Consider the following 474-residue polypeptide: Nitrosuccinate lyase (474 aa).

Catalysis depends on S295, which acts as the Proton acceptor. The fumarate site is built by K301 and N303. The active-site Proton donor is R334.

Belongs to the class-II fumarase/aspartase family.

It carries out the reaction 2-nitrobutanedioate = fumarate + nitrite + H(+). In terms of biological role, involved in the biosynthesis of desferrioxamine derivatives which have iron-binding properties and may act as siderophores. Catalyzes the formation of nitrous acid from nitrosuccinic acid (2-nitrobutanedioate) by elimination of its nitro group. This chain is Nitrosuccinate lyase, found in Streptomyces davaonensis (strain DSM 101723 / JCM 4913 / KCC S-0913 / 768).